Reading from the N-terminus, the 513-residue chain is Anthranilate synthase component 1 (513 aa).

L-tryptophan-binding positions include serine 50 and 279–281 (PYM). Residue 314 to 315 (GT) coordinates chorismate. Glutamate 341 provides a ligand contact to Mg(2+). Chorismate contacts are provided by residues tyrosine 429, arginine 449, 463–465 (GAG), and glycine 465. Glutamate 478 is a binding site for Mg(2+).

It belongs to the anthranilate synthase component I family. Heterotetramer consisting of two non-identical subunits: a beta subunit (TrpG) and a large alpha subunit (TrpE). It depends on Mg(2+) as a cofactor.

The catalysed reaction is chorismate + L-glutamine = anthranilate + pyruvate + L-glutamate + H(+). Its pathway is amino-acid biosynthesis; L-tryptophan biosynthesis; L-tryptophan from chorismate: step 1/5. Feedback inhibited by tryptophan. Part of a heterotetrameric complex that catalyzes the two-step biosynthesis of anthranilate, an intermediate in the biosynthesis of L-tryptophan. In the first step, the glutamine-binding beta subunit (TrpG) of anthranilate synthase (AS) provides the glutamine amidotransferase activity which generates ammonia as a substrate that, along with chorismate, is used in the second step, catalyzed by the large alpha subunit of AS (TrpE) to produce anthranilate. In the absence of TrpG, TrpE can synthesize anthranilate directly from chorismate and high concentrations of ammonia. This is Anthranilate synthase component 1 (trpE) from Bacillus pumilus (Bacillus mesentericus).